A 259-amino-acid chain; its full sequence is GTP cyclohydrolase FolE2 (259 aa).

This sequence belongs to the GTP cyclohydrolase IV family.

It catalyses the reaction GTP + H2O = 7,8-dihydroneopterin 3'-triphosphate + formate + H(+). It participates in cofactor biosynthesis; 7,8-dihydroneopterin triphosphate biosynthesis; 7,8-dihydroneopterin triphosphate from GTP: step 1/1. In terms of biological role, converts GTP to 7,8-dihydroneopterin triphosphate. This is GTP cyclohydrolase FolE2 from Thermosipho africanus (strain TCF52B).